The chain runs to 432 residues: Metacaspase-1 (432 aa).

Low complexity-rich tracts occupy residues Met-1–Gly-14 and Gln-29–Tyr-59. The interval Met-1–Tyr-70 is disordered. The segment covering Ala-60–Tyr-70 has biased composition (pro residues). Active-site residues include His-220 and Cys-276.

This sequence belongs to the peptidase C14B family.

The protein resides in the cytoplasm. The protein localises to the nucleus. In terms of biological role, mediates cell death (apoptosis) triggered by oxygen stress, salt stress or chronological aging. Regulated cell death can prevent a release of toxic cellular components, thus avoiding necrotic collapse of the colony, and can also provide nutrients for healthy cells. Therefore, regulated cell death in yeast colonies can be as important for their development as are apoptosis and related processes that occur within metazoa. The chain is Metacaspase-1 (MCA1) from Saccharomyces cerevisiae (strain YJM789) (Baker's yeast).